A 160-amino-acid polypeptide reads, in one-letter code: Serine-protein kinase RsbW (160 aa).

The protein belongs to the anti-sigma-factor family.

It catalyses the reaction L-seryl-[protein] + ATP = O-phospho-L-seryl-[protein] + ADP + H(+). The enzyme catalyses L-threonyl-[protein] + ATP = O-phospho-L-threonyl-[protein] + ADP + H(+). Functionally, negative regulator of sigma-B activity. Phosphorylates and inactivates its specific antagonist protein, RsbV. Upon phosphorylation of RsbV, RsbW is released and binds to sigma-B, thereby blocking its ability to form an RNA polymerase holoenzyme (E-sigma-B). The polypeptide is Serine-protein kinase RsbW (Bacillus cereus (strain ZK / E33L)).